The chain runs to 119 residues: Ribonuclease P protein component (119 aa).

Belongs to the RnpA family. In terms of assembly, consists of a catalytic RNA component (M1 or rnpB) and a protein subunit.

The enzyme catalyses Endonucleolytic cleavage of RNA, removing 5'-extranucleotides from tRNA precursor.. Its function is as follows. RNaseP catalyzes the removal of the 5'-leader sequence from pre-tRNA to produce the mature 5'-terminus. It can also cleave other RNA substrates such as 4.5S RNA. The protein component plays an auxiliary but essential role in vivo by binding to the 5'-leader sequence and broadening the substrate specificity of the ribozyme. The polypeptide is Ribonuclease P protein component (Streptococcus pyogenes serotype M1).